A 182-amino-acid chain; its full sequence is Troponin I, fast skeletal muscle (182 aa).

Gly-2 bears the N-acetylglycine mark. Positions 2–48 are involved in binding TNC; the sequence is GDEEKRNRAITARRQHLKSVMLQIAATELEKEESRRESEKENYLSEH. Thr-12 carries the phosphothreonine modification. Basic and acidic residues predominate over residues 29-45; sequence ELEKEESRRESEKENYL. Residues 29-53 form a disordered region; that stretch reads ELEKEESRRESEKENYLSEHCPPLH. Positions 97–117 are involved in binding TNC and actin; it reads NQKLFDLRGKFKRPPLRRVRM. Ser-118 bears the Phosphoserine mark.

It belongs to the troponin I family. In terms of assembly, binds to actin and tropomyosin.

Troponin I is the inhibitory subunit of troponin, the thin filament regulatory complex which confers calcium-sensitivity to striated muscle actomyosin ATPase activity. This chain is Troponin I, fast skeletal muscle (Tnni2), found in Mus musculus (Mouse).